The chain runs to 235 residues: NADH-quinone oxidoreductase subunit B 2 (235 aa).

Residues 1–14 (MGLTSRPTPASRQP) show a composition bias toward low complexity. The interval 1–24 (MGLTSRPTPASRQPASPPPADPVL) is disordered. Positions 63, 64, 129, and 159 each coordinate [4Fe-4S] cluster. Residues 188 to 235 (TGATGGGPSTDALRSGLVAAPTAPGPTAPASTAPGPTAPAPTQDEERR) form a disordered region.

The protein belongs to the complex I 20 kDa subunit family. As to quaternary structure, NDH-1 is composed of 14 different subunits. Subunits NuoB, C, D, E, F, and G constitute the peripheral sector of the complex. [4Fe-4S] cluster serves as cofactor.

The protein resides in the cell membrane. It catalyses the reaction a quinone + NADH + 5 H(+)(in) = a quinol + NAD(+) + 4 H(+)(out). In terms of biological role, NDH-1 shuttles electrons from NADH, via FMN and iron-sulfur (Fe-S) centers, to quinones in the respiratory chain. The immediate electron acceptor for the enzyme in this species is believed to be a menaquinone. Couples the redox reaction to proton translocation (for every two electrons transferred, four hydrogen ions are translocated across the cytoplasmic membrane), and thus conserves the redox energy in a proton gradient. This chain is NADH-quinone oxidoreductase subunit B 2, found in Streptomyces griseus subsp. griseus (strain JCM 4626 / CBS 651.72 / NBRC 13350 / KCC S-0626 / ISP 5235).